We begin with the raw amino-acid sequence, 198 residues long: NAD(P)H dehydrogenase (quinone) (198 aa).

The region spanning Ile4–Val189 is the Flavodoxin-like domain. FMN-binding positions include Ser10–Ile15 and Thr78–Phe80. Tyr12 is an NAD(+) binding site. Trp98 contributes to the substrate binding site. FMN-binding positions include Ser113–Gly118 and His133.

Belongs to the WrbA family. FMN serves as cofactor.

The catalysed reaction is a quinone + NADH + H(+) = a quinol + NAD(+). It carries out the reaction a quinone + NADPH + H(+) = a quinol + NADP(+). This chain is NAD(P)H dehydrogenase (quinone), found in Salmonella paratyphi A (strain ATCC 9150 / SARB42).